Here is a 111-residue protein sequence, read N- to C-terminus: Large ribosomal subunit protein eL33z (111 aa).

This sequence belongs to the eukaryotic ribosomal protein eL33 family.

In Arabidopsis thaliana (Mouse-ear cress), this protein is Large ribosomal subunit protein eL33z (RPL35AB).